Reading from the N-terminus, the 186-residue chain is Elongation factor P (186 aa).

The protein belongs to the elongation factor P family.

Its subcellular location is the cytoplasm. Its pathway is protein biosynthesis; polypeptide chain elongation. In terms of biological role, involved in peptide bond synthesis. Stimulates efficient translation and peptide-bond synthesis on native or reconstituted 70S ribosomes in vitro. Probably functions indirectly by altering the affinity of the ribosome for aminoacyl-tRNA, thus increasing their reactivity as acceptors for peptidyl transferase. This is Elongation factor P from Brucella canis (strain ATCC 23365 / NCTC 10854 / RM-666).